A 20-amino-acid chain; its full sequence is Punein (20 aa).

In terms of domain architecture, Barwin spans 1–20 (YHYYNPEENHFCATWDASKP).

Post-translationally, the N-terminus is blocked.

The sequence is that of Punein from Punica granatum (Pomegranate).